A 328-amino-acid polypeptide reads, in one-letter code: MHIPDNYLSPATCGTLVTAMAPVWTVAVLKVKVQIKKHHETLPMLGIAASLAFLIMMFNLPIPGGTTAHAVGGTLLAVLIGPWAACLALTVTLLLQALLFGDGGILAFGANALNMAVIMPFVGYACYRLGQKWHHEKLGLAIGAYLGINMAALVAGIELGLQPILAHTASGAPLYCPYGLNITIPAMLTAHLLVAGWVEVVFTLLVFQFVKRVAPTNLYQTPTRRNQRPWIALLLGLAVLSPLGLLASNTAWGEWSPQELQQRLAQQHISTHAPQGMVHGFHFQALFSDYAIAGLPVSVGYILSAITAVLIFLLLIRGLQHETDTSQH.

Transmembrane regions (helical) follow at residues 8–28 (LSPA…TVAV), 42–62 (LPML…NLPI), 75–95 (LLAV…TLLL), 103–123 (GGIL…PFVG), 138–158 (LGLA…AGIE), 187–207 (MLTA…LLVF), 229–249 (PWIA…LASN), and 296–316 (PVSV…LLLI).

It belongs to the CbiM family. NikM subfamily. May form an energy-coupling factor (ECF) transporter complex composed of an ATP-binding protein (A component, LarO), a transmembrane protein (T component, LarQ) and a fused possible substrate-capture protein (S component, LarMN) of unknown stoichiometry.

It localises to the cell membrane. Probably part of the energy-coupling factor (ECF) transporter complex LarMNQO involved in nickel import. The polypeptide is Probable fused nickel transport protein LarMN (Lactiplantibacillus plantarum (strain ATCC BAA-793 / NCIMB 8826 / WCFS1) (Lactobacillus plantarum)).